Consider the following 400-residue polypeptide: Phosphoglycerate kinase (400 aa).

Substrate is bound by residues 24 to 26 (DFN), Arg40, 63 to 66 (HFGR), Arg121, and Arg154. Residues Lys205, Gly296, Glu327, and 356 to 359 (GGDS) contribute to the ATP site.

The protein belongs to the phosphoglycerate kinase family. In terms of assembly, monomer.

It localises to the cytoplasm. It catalyses the reaction (2R)-3-phosphoglycerate + ATP = (2R)-3-phospho-glyceroyl phosphate + ADP. It participates in carbohydrate degradation; glycolysis; pyruvate from D-glyceraldehyde 3-phosphate: step 2/5. This chain is Phosphoglycerate kinase, found in Thermosynechococcus vestitus (strain NIES-2133 / IAM M-273 / BP-1).